The chain runs to 604 residues: Numb-like protein (604 aa).

Disordered regions lie at residues M1–A68, G223–A283, A372–P457, and K531–L604. Positions R74–F225 constitute a PID domain. Phosphoserine occurs at positions 224 and 228. Basic and acidic residues predominate over residues P233–E245. Low complexity predominate over residues A246–G260. At S263 the chain carries Phosphoserine. Phosphothreonine is present on T279. Positions T409 to E418 are enriched in basic and acidic residues. S411 is subject to Phosphoserine. Low complexity-rich tracts occupy residues Q427–Q441 and S542–P552. Residues N553–E568 are compositionally biased toward pro residues.

Interacts (via PTB domain) with MAP3K7IP2 (via C-terminal). Interacts (via C-terminal) with TRAF6 (via TRAF domains). Associates with EPS15 and NOTCH1. Preferentially expressed in the nervous system. In the developing neocortex, expressed in postmitotic neurons in the cortical plate but not in progenitors within the ventricular zone.

It localises to the cytoplasm. Its function is as follows. Plays a role in the process of neurogenesis. Required throughout embryonic neurogenesis to maintain neural progenitor cells, also called radial glial cells (RGCs), by allowing their daughter cells to choose progenitor over neuronal cell fate. Not required for the proliferation of neural progenitor cells before the onset of embryonic neurogenesis. Also required postnatally in the subventricular zone (SVZ) neurogenesis by regulating SVZ neuroblasts survival and ependymal wall integrity. Negative regulator of NF-kappa-B signaling pathway. The inhibition of NF-kappa-B activation is mediated at least in part, by preventing MAP3K7IP2 to interact with polyubiquitin chains of TRAF6 and RIPK1 and by stimulating the 'Lys-48'-linked polyubiquitination and degradation of TRAF6 in cortical neurons. This is Numb-like protein (Numbl) from Mus musculus (Mouse).